The sequence spans 97 residues: Large ribosomal subunit protein eL21 (97 aa).

This sequence belongs to the eukaryotic ribosomal protein eL21 family.

In Methanococcoides burtonii (strain DSM 6242 / NBRC 107633 / OCM 468 / ACE-M), this protein is Large ribosomal subunit protein eL21.